Here is a 360-residue protein sequence, read N- to C-terminus: NAD(P)H-quinone oxidoreductase subunit 1, chloroplastic (360 aa).

A run of 8 helical transmembrane segments spans residues 30-50, 98-118, 127-147, 165-185, 203-223, 253-273, 297-317, and 340-360; these read FLPI…LVWL, FSIG…VIPF, FNIG…GLLM, AAQS…ISLL, FWGW…ISSL, FGLF…FVTV, IFGT…FLFI, and FLLP…VFSL.

This sequence belongs to the complex I subunit 1 family. As to quaternary structure, NDH is composed of at least 16 different subunits, 5 of which are encoded in the nucleus.

The protein localises to the plastid. Its subcellular location is the chloroplast thylakoid membrane. The enzyme catalyses a plastoquinone + NADH + (n+1) H(+)(in) = a plastoquinol + NAD(+) + n H(+)(out). It carries out the reaction a plastoquinone + NADPH + (n+1) H(+)(in) = a plastoquinol + NADP(+) + n H(+)(out). In terms of biological role, NDH shuttles electrons from NAD(P)H:plastoquinone, via FMN and iron-sulfur (Fe-S) centers, to quinones in the photosynthetic chain and possibly in a chloroplast respiratory chain. The immediate electron acceptor for the enzyme in this species is believed to be plastoquinone. Couples the redox reaction to proton translocation, and thus conserves the redox energy in a proton gradient. In Aethionema cordifolium (Lebanon stonecress), this protein is NAD(P)H-quinone oxidoreductase subunit 1, chloroplastic.